A 404-amino-acid polypeptide reads, in one-letter code: Keratin, type I cuticular Ha3-I (404 aa).

Residues 1 to 56 (MPYNCCLPAMSCRTSCSSRPCVPPSCHGCTLPGACNIPANVGNCNWFCEGSFNGNE) are head. An IF rod domain is found at 56–367 (EKETMQFLND…GLLESEDCKL (312 aa)). The tract at residues 57 to 91 (KETMQFLNDRLASYMEKVRQLERENAELECRIQER) is coil 1A. The interval 92–102 (NQQQDPLVCPA) is linker 1. Positions 103-203 (YQAYFRTIEE…HEQEVNTLRC (101 aa)) are coil 1B. The tract at residues 204 to 219 (QLGDRLNVEVDAAPTV) is linker 12. Residues 220 to 363 (DLNRVLNETR…NTYRGLLESE (144 aa)) are coil 2. The interval 364-404 (DCKLPCNPCATTNACDKPIGPCVPNPCVTRPRCGPCNTFVR) is tail.

The protein belongs to the intermediate filament family.

This is Keratin, type I cuticular Ha3-I from Mus musculus (Mouse).